An 831-amino-acid chain; its full sequence is Maltodextrin phosphorylase (831 aa).

Position 592 is an N6-(pyridoxal phosphate)lysine (K592).

Belongs to the glycogen phosphorylase family. In terms of assembly, trimer (at 25 degrees Celsius). The cofactor is pyridoxal 5'-phosphate.

The catalysed reaction is [(1-&gt;4)-alpha-D-glucosyl](n) + phosphate = [(1-&gt;4)-alpha-D-glucosyl](n-1) + alpha-D-glucose 1-phosphate. In terms of biological role, phosphorylase is an important allosteric enzyme in carbohydrate metabolism. Catalyzes the phospholytic cleavage of maltodextrins with a minimal chain length of five glucose residues to yield glucose-1-phosphate. Low activity with tetraose and no activity with triose and maltose. Long maltodextrins (8 to 15 glucose units), amylose and starch are not as good substrates as maltoheptaose. The polypeptide is Maltodextrin phosphorylase (malP) (Thermococcus litoralis (strain ATCC 51850 / DSM 5473 / JCM 8560 / NS-C)).